Here is a 429-residue protein sequence, read N- to C-terminus: Keratin, type I cytoskeletal 20 (429 aa).

A disordered region spans residues 1–26 (MDFSRRSFHRSLSSSSQGPALSTSGS). A head region spans residues 1-74 (MDFSRRSFHR…SNGGDLFGGN (74 aa)). Positions 10-26 (RSLSSSSQGPALSTSGS) are enriched in low complexity. Ser-13, Ser-16, and Ser-26 each carry phosphoserine. Positions 75–110 (EKLAMQNLNDRLASYLEKVRSLEQSNSKLEAQIKQW) are coil 1A. The IF rod domain occupies 75 to 386 (EKLAMQNLND…RLLEGEDIKT (312 aa)). The linker 1 stretch occupies residues 111-128 (YETNAPSTIRDYSSYYAQ). Residues 129–220 (IKELQDQIKD…KEHQEEVEVL (92 aa)) form a coil 1B region. Positions 221–243 (RRQLGNNVNVEVDAAPGLNLGEI) are linker 12. Residues 244–382 (MNEMRQKYEI…ATYRRLLEGE (139 aa)) form a coil 2 region. The interval 383–429 (DIKTTEYQLNTLEAKDIKKTRKIKTVVEEVVDGKVVSSEVKEIEENI) is tail.

Belongs to the intermediate filament family. Heterotetramer of two type I and two type II keratins. Associates with KRT8. In terms of processing, hyperphosphorylation at Ser-13 occurs during the early stages of apoptosis but becomes less prominent during the later stages. Phosphorylation at Ser-13 also increases in response to stress brought on by cell injury. Post-translationally, proteolytically cleaved by caspases during apoptosis. Cleavage occurs at Asp-233. In terms of tissue distribution, expressed predominantly in the intestinal epithelium in differentiated villus cells.

Plays a significant role in maintaining keratin filament organization in intestinal epithelia. When phosphorylated, plays a role in the secretion of mucin in the small intestine. The polypeptide is Keratin, type I cytoskeletal 20 (Krt20) (Rattus norvegicus (Rat)).